The primary structure comprises 347 residues: Protein RecA (347 aa).

65 to 72 (GPESSGKT) serves as a coordination point for ATP. The segment at 328 to 347 (SPAQPEAPAAGEKPEQEEEF) is disordered.

This sequence belongs to the RecA family.

The protein localises to the cytoplasm. Can catalyze the hydrolysis of ATP in the presence of single-stranded DNA, the ATP-dependent uptake of single-stranded DNA by duplex DNA, and the ATP-dependent hybridization of homologous single-stranded DNAs. It interacts with LexA causing its activation and leading to its autocatalytic cleavage. The polypeptide is Protein RecA (Vibrio parahaemolyticus serotype O3:K6 (strain RIMD 2210633)).